A 304-amino-acid chain; its full sequence is Mediator of RNA polymerase II transcription subunit 7 (304 aa).

Disordered regions lie at residues 42–85 (NNQT…PKQP) and 137–158 (NTDTDINGNQEVDAGDSTGDEN).

This sequence belongs to the Mediator complex subunit 7 family. Component of the Mediator complex.

The protein resides in the nucleus. Its function is as follows. Component of the Mediator complex, a coactivator involved in the regulated transcription of nearly all RNA polymerase II-dependent genes. Mediator functions as a bridge to convey information from gene-specific regulatory proteins to the basal RNA polymerase II transcription machinery. Mediator is recruited to promoters by direct interactions with regulatory proteins and serves as a scaffold for the assembly of a functional preinitiation complex with RNA polymerase II and the general transcription factors. The sequence is that of Mediator of RNA polymerase II transcription subunit 7 (MED7) from Candida albicans (strain SC5314 / ATCC MYA-2876) (Yeast).